Consider the following 274-residue polypeptide: tRNA pseudouridine synthase A (274 aa).

Aspartate 54 acts as the Nucleophile in catalysis. Tyrosine 112 lines the substrate pocket.

Belongs to the tRNA pseudouridine synthase TruA family. In terms of assembly, homodimer.

The catalysed reaction is uridine(38/39/40) in tRNA = pseudouridine(38/39/40) in tRNA. Formation of pseudouridine at positions 38, 39 and 40 in the anticodon stem and loop of transfer RNAs. The sequence is that of tRNA pseudouridine synthase A from Solidesulfovibrio magneticus (strain ATCC 700980 / DSM 13731 / RS-1) (Desulfovibrio magneticus).